A 279-amino-acid chain; its full sequence is Small ribosomal subunit protein uS2 (279 aa).

Residues 255 to 279 (LLAGATTAAPEAAAGEAAAAPEQSS) form a disordered region.

This sequence belongs to the universal ribosomal protein uS2 family.

In Mycolicibacterium gilvum (strain PYR-GCK) (Mycobacterium gilvum (strain PYR-GCK)), this protein is Small ribosomal subunit protein uS2.